Consider the following 199-residue polypeptide: uncharacterized protein (199 aa).

To U.parvum UU376.

This is an uncharacterized protein from Ureaplasma parvum serovar 3 (strain ATCC 700970).